We begin with the raw amino-acid sequence, 544 residues long: Bacillolysin (544 aa).

The first 25 residues, 1-25 (MNKRAMLGAIGLAFGLMAWPFGASA), serve as a signal peptide directing secretion. Positions 26 to 225 (KGKSMVWNEQ…DEAKPGGAQP (200 aa)) are cleaved as a propeptide — activation peptide. The Ca(2+) site is built by D285, D287, Q289, and D366. H370 lines the Zn(2+) pocket. The active site involves E371. Zn(2+)-binding residues include H374 and E394. Residues E405, N411, D413, E415, E418, Y421, T422, V425, and D428 each coordinate Ca(2+). H459 functions as the Proton donor in the catalytic mechanism.

It belongs to the peptidase M4 family. Ca(2+) is required as a cofactor. Zn(2+) serves as cofactor.

The protein resides in the secreted. The catalysed reaction is Similar, but not identical, to that of thermolysin.. In terms of biological role, extracellular zinc metalloprotease. This chain is Bacillolysin (npr), found in Bacillus caldolyticus.